The chain runs to 34 residues: Protein HRURF (34 aa).

May function as an inhibitory translational control element that can negatively regulate protein translation of HR gene. In Homo sapiens (Human), this protein is Protein HRURF.